The chain runs to 186 residues: UPF0200 protein Mbar_A0975 (186 aa).

8–15 (GMPASGKS) provides a ligand contact to ATP.

This sequence belongs to the UPF0200 family.

This chain is UPF0200 protein Mbar_A0975, found in Methanosarcina barkeri (strain Fusaro / DSM 804).